Consider the following 947-residue polypeptide: Translation initiation factor IF-2 (947 aa).

The tract at residues 55-361 (TKDAQAGSAK…PVTERKFHEL (307 aa)) is disordered. Over residues 63–73 (AKDKQVAEQKA) the composition is skewed to basic and acidic residues. A compositionally biased stretch (low complexity) spans 76 to 90 (AKATTPQPAAATQEA). Composition is skewed to basic and acidic residues over residues 103–116 (FKAE…EQAA), 125–134 (SNDRKSDYRQ), and 170–183 (NDGH…DKNR). A compositionally biased stretch (low complexity) spans 190-204 (RQQDTGRQGQTQAGA). 3 stretches are compositionally biased toward basic and acidic residues: residues 225–249 (ARQR…RQEA), 257–267 (QTEDKKHREAS), and 294–311 (NRPD…DGQK). A compositionally biased stretch (low complexity) spans 316 to 334 (SWNSQNQVRNQKNSNWNNN). A compositionally biased stretch (basic residues) spans 335-345 (KKNKKGKHHKN). In terms of domain architecture, tr-type G spans 448 to 617 (ERAPVVTIMG…LLVAEVEELK (170 aa)). The G1 stretch occupies residues 457–464 (GHVDHGKT). Residue 457 to 464 (GHVDHGKT) participates in GTP binding. A G2 region spans residues 482 to 486 (GITQH). The segment at 503–506 (DTPG) is G3. GTP is bound by residues 503–507 (DTPGH) and 557–560 (NKID). The interval 557-560 (NKID) is G4. Residues 593 to 595 (SAK) are G5.

The protein belongs to the TRAFAC class translation factor GTPase superfamily. Classic translation factor GTPase family. IF-2 subfamily.

It is found in the cytoplasm. One of the essential components for the initiation of protein synthesis. Protects formylmethionyl-tRNA from spontaneous hydrolysis and promotes its binding to the 30S ribosomal subunits. Also involved in the hydrolysis of GTP during the formation of the 70S ribosomal complex. This Streptococcus equi subsp. zooepidemicus (strain MGCS10565) protein is Translation initiation factor IF-2.